Consider the following 255-residue polypeptide: Ribonuclease HII (255 aa).

The 184-residue stretch at 72–255 folds into the RNase H type-2 domain; it reads AIICGIDEVG…KSFEPIKSLL (184 aa). Aspartate 78, glutamate 79, and aspartate 170 together coordinate a divalent metal cation.

Belongs to the RNase HII family. The cofactor is Mn(2+). Requires Mg(2+) as cofactor.

It is found in the cytoplasm. It catalyses the reaction Endonucleolytic cleavage to 5'-phosphomonoester.. Functionally, endonuclease that specifically degrades the RNA of RNA-DNA hybrids. The sequence is that of Ribonuclease HII from Staphylococcus aureus (strain MSSA476).